A 1222-amino-acid polypeptide reads, in one-letter code: Chitin synthase 4 (1222 aa).

2 disordered regions span residues 1-101 (MSLP…ERNR) and 138-200 (TERT…KRIE). Composition is skewed to polar residues over residues 11–24 (QAYN…NSPS) and 42–77 (NQAS…SPDG). The segment covering 182–196 (SGKIKRKSRRHSKPP) has biased composition (basic residues). 2 helical membrane-spanning segments follow: residues 205–225 (PPTF…GFIM) and 243–263 (MGLI…TFGF). Asn-378, Asn-418, and Asn-440 each carry an N-linked (GlcNAc...) asparagine glycan. Residues 513-533 (ALILSVVGVRFFLAIIFQWFI) form a helical membrane-spanning segment. The disordered stretch occupies residues 576–630 (TVYGSSDRSSKRASFLPTTSRFSSVGGPDIRSQGGRRMPTTMASQSTSNQLLTPN). A compositionally biased stretch (polar residues) spans 616-630 (TMASQSTSNQLLTPN). N-linked (GlcNAc...) asparagine glycans are attached at residues Asn-637 and Asn-1030. The next 3 helical transmembrane spans lie at 1055–1075 (FIIF…AFTF), 1089–1109 (IIPL…VIIT), and 1113–1133 (WSYI…NFVL). The segment at 1202 to 1222 (GGQTWTSPPGHQYNEEYYSDA) is disordered.

It belongs to the chitin synthase family. Class IV subfamily.

It is found in the cell membrane. It catalyses the reaction [(1-&gt;4)-N-acetyl-beta-D-glucosaminyl](n) + UDP-N-acetyl-alpha-D-glucosamine = [(1-&gt;4)-N-acetyl-beta-D-glucosaminyl](n+1) + UDP + H(+). In terms of biological role, polymerizes chitin, a structural polymer of the cell wall and septum, by transferring the sugar moiety of UDP-GlcNAc to the non-reducing end of the growing chitin polymer. Shows additive effects in septum formation with CHS1, CHS2, CHS3A, CHS5, CHS6 and CHS7. Regulates conidiation. Involved in virulence and mediates mycotoxin deoxinivalenol (DON) biosynthesis via the regulation of the expression of TRI4, TRI5 and TRI6. The sequence is that of Chitin synthase 4 from Gibberella zeae (strain ATCC MYA-4620 / CBS 123657 / FGSC 9075 / NRRL 31084 / PH-1) (Wheat head blight fungus).